The sequence spans 286 residues: Translocon-associated protein subunit alpha (286 aa).

The first 21 residues, 1–21 (MRLLPRLLLLFLLAFPAAVLL), serve as a signal peptide directing secretion. Over 22-207 (RGGPGGSLAL…EREDGLDGET (186 aa)) the chain is Lumenal. Residues 46 to 75 (IIEDEDDEAEVEEDEPTDLAEDKEEEDVSS) are compositionally biased toward acidic residues. The tract at residues 46 to 83 (IIEDEDDEAEVEEDEPTDLAEDKEEEDVSSEPEASPSA) is disordered. N-linked (GlcNAc...) asparagine glycans are attached at residues Asn-136 and Asn-191. Residues 208–228 (IFMYMFLAGLGLLVVVGLHQL) traverse the membrane as a helical segment. At 229-286 (LESRKRKRPIQKVEMGTSSQNDVDMSWIPQETLNQINKASPRRQPRKRAQKRSVGSDE) the chain is on the cytoplasmic side. Residues 236 to 286 (RPIQKVEMGTSSQNDVDMSWIPQETLNQINKASPRRQPRKRAQKRSVGSDE) are disordered. The span at 244 to 266 (GTSSQNDVDMSWIPQETLNQINK) shows a compositional bias: polar residues. Ser-247 carries the post-translational modification Phosphoserine. Thr-260 is modified (phosphothreonine). A Phosphoserine modification is found at Ser-268. The span at 268 to 279 (SPRRQPRKRAQK) shows a compositional bias: basic residues.

The protein belongs to the TRAP-alpha family. Heterotetramer of TRAP-alpha, TRAP-beta, TRAP-delta and TRAP-gamma. Interacts with palmitoylated calnexin (CALX), the interaction is required for efficient folding of glycosylated proteins.

It localises to the endoplasmic reticulum membrane. In terms of biological role, TRAP proteins are part of a complex whose function is to bind calcium to the ER membrane and thereby regulate the retention of ER resident proteins. May be involved in the recycling of the translocation apparatus after completion of the translocation process or may function as a membrane-bound chaperone facilitating folding of translocated proteins. The protein is Translocon-associated protein subunit alpha (Ssr1) of Mus musculus (Mouse).